The chain runs to 368 residues: tRNA/tmRNA (uracil-C(5))-methyltransferase (368 aa).

Residues glutamine 192, tyrosine 220, asparagine 225, glutamate 241, and aspartate 301 each contribute to the S-adenosyl-L-methionine site. Cysteine 326 functions as the Nucleophile in the catalytic mechanism. Glutamate 360 serves as the catalytic Proton acceptor.

Belongs to the class I-like SAM-binding methyltransferase superfamily. RNA M5U methyltransferase family. TrmA subfamily.

The enzyme catalyses uridine(54) in tRNA + S-adenosyl-L-methionine = 5-methyluridine(54) in tRNA + S-adenosyl-L-homocysteine + H(+). It catalyses the reaction uridine(341) in tmRNA + S-adenosyl-L-methionine = 5-methyluridine(341) in tmRNA + S-adenosyl-L-homocysteine + H(+). Functionally, dual-specificity methyltransferase that catalyzes the formation of 5-methyluridine at position 54 (m5U54) in all tRNAs, and that of position 341 (m5U341) in tmRNA (transfer-mRNA). This chain is tRNA/tmRNA (uracil-C(5))-methyltransferase, found in Actinobacillus pleuropneumoniae serotype 5b (strain L20).